The sequence spans 432 residues: 3-isopropylmalate dehydratase large subunit (432 aa).

The [4Fe-4S] cluster site is built by Cys299, Cys364, and Cys367.

Belongs to the aconitase/IPM isomerase family. LeuC type 2 subfamily. In terms of assembly, heterodimer of LeuC and LeuD. [4Fe-4S] cluster serves as cofactor.

The enzyme catalyses (2R,3S)-3-isopropylmalate = (2S)-2-isopropylmalate. It participates in amino-acid biosynthesis; L-leucine biosynthesis; L-leucine from 3-methyl-2-oxobutanoate: step 2/4. In terms of biological role, catalyzes the isomerization between 2-isopropylmalate and 3-isopropylmalate, via the formation of 2-isopropylmaleate. This is 3-isopropylmalate dehydratase large subunit from Aquifex aeolicus (strain VF5).